A 201-amino-acid chain; its full sequence is Small ribosomal subunit protein uS4 (201 aa).

The interval 1–38 (MARYTGPATRKSRRLGVDLVGGDQSFEKRPYPPGQHGR) is disordered. Positions 91 to 157 (SRLDNVVYRA…DPFVIARETA (67 aa)) constitute an S4 RNA-binding domain.

It belongs to the universal ribosomal protein uS4 family. As to quaternary structure, part of the 30S ribosomal subunit. Contacts protein S5. The interaction surface between S4 and S5 is involved in control of translational fidelity.

Its function is as follows. One of the primary rRNA binding proteins, it binds directly to 16S rRNA where it nucleates assembly of the body of the 30S subunit. In terms of biological role, with S5 and S12 plays an important role in translational accuracy. This Mycobacterium sp. (strain JLS) protein is Small ribosomal subunit protein uS4.